We begin with the raw amino-acid sequence, 333 residues long: Probable G-protein coupled receptor 33 (333 aa).

Over Met-1 to Met-30 the chain is Extracellular. 3 N-linked (GlcNAc...) asparagine glycosylation sites follow: Asn-5, Asn-12, and Asn-19. The chain crosses the membrane as a helical span at residues Ile-31 to Val-53. Over Leu-54–Thr-64 the chain is Cytoplasmic. A helical membrane pass occupies residues Leu-65–Thr-86. Residues Ser-87–Val-103 lie on the Extracellular side of the membrane. A disulfide bridge connects residues Cys-101 and Cys-179. The chain crosses the membrane as a helical span at residues Phe-104–Leu-124. The Cytoplasmic portion of the chain corresponds to Asp-125–Arg-143. The chain crosses the membrane as a helical span at residues Trp-144–Ile-165. Over Phe-166–Arg-209 the chain is Extracellular. A helical membrane pass occupies residues Phe-210 to Ser-230. Topologically, residues Lys-231–Val-246 are cytoplasmic. The helical transmembrane segment at Met-247–Leu-268 threads the bilayer. Residues Leu-269 to Leu-283 are Extracellular-facing. Asn-272 is a glycosylation site (N-linked (GlcNAc...) asparagine). Residues Thr-284–Gly-303 form a helical membrane-spanning segment. Topologically, residues Glu-304–Thr-333 are cytoplasmic.

It belongs to the G-protein coupled receptor 1 family.

Its subcellular location is the cell membrane. In terms of biological role, orphan receptor; could be a chemoattractant receptor. The polypeptide is Probable G-protein coupled receptor 33 (GPR33) (Pan troglodytes (Chimpanzee)).